Consider the following 367-residue polypeptide: Heat-inducible transcription repressor HrcA (367 aa).

Belongs to the HrcA family.

Functionally, negative regulator of class I heat shock genes (grpE-dnaK-dnaJ and groELS operons). Prevents heat-shock induction of these operons. The chain is Heat-inducible transcription repressor HrcA from Acaryochloris marina (strain MBIC 11017).